The sequence spans 251 residues: Probable transcriptional regulatory protein MSMEG_2940/MSMEI_2866 (251 aa).

Belongs to the TACO1 family.

Its subcellular location is the cytoplasm. This Mycolicibacterium smegmatis (strain ATCC 700084 / mc(2)155) (Mycobacterium smegmatis) protein is Probable transcriptional regulatory protein MSMEG_2940/MSMEI_2866.